A 325-amino-acid polypeptide reads, in one-letter code: MTAHWKQNQKNLMLFSGRAHPELAEAVAKELDVNVTPMTARDFANGEIYVRFEESVRGSDCFVLQSHTQPLNKWLMEQLLMIDALKRGSAKRITAILPFYPYARQDKKHRGREPISARLIADLMLTAGADRIVSVDLHTDQIQGFFDGPVDHMHAMPILTDHIKENYNLDNICVVSPDAGRVKVAEKWANTLGDAPMAFVHKTRSTEVANQVVANRVVGDVDGKDCVLLDDMIDTGGTIAGAVGVLKKAGAKSVVIACTHGVFSDPARERLSACGAEEVITTDTLPQSTEGWSNLTVLSIAPLLARTINEIFENGSVTTLFEGEA.

ATP-binding positions include 45 to 47 (NGE) and 104 to 105 (RQ). Mg(2+) is bound by residues His138 and Asp178. The active site involves Lys202. D-ribose 5-phosphate is bound by residues Arg204, Asp230, and 234 to 238 (DTGGT).

It belongs to the ribose-phosphate pyrophosphokinase family. Class I subfamily. Homohexamer. Requires Mg(2+) as cofactor.

Its subcellular location is the cytoplasm. The enzyme catalyses D-ribose 5-phosphate + ATP = 5-phospho-alpha-D-ribose 1-diphosphate + AMP + H(+). It participates in metabolic intermediate biosynthesis; 5-phospho-alpha-D-ribose 1-diphosphate biosynthesis; 5-phospho-alpha-D-ribose 1-diphosphate from D-ribose 5-phosphate (route I): step 1/1. Functionally, involved in the biosynthesis of the central metabolite phospho-alpha-D-ribosyl-1-pyrophosphate (PRPP) via the transfer of pyrophosphoryl group from ATP to 1-hydroxyl of ribose-5-phosphate (Rib-5-P). The polypeptide is Ribose-phosphate pyrophosphokinase (Corynebacterium glutamicum (strain ATCC 13032 / DSM 20300 / JCM 1318 / BCRC 11384 / CCUG 27702 / LMG 3730 / NBRC 12168 / NCIMB 10025 / NRRL B-2784 / 534)).